The sequence spans 388 residues: GTPase Obg (388 aa).

An Obg domain is found at 1-159 (MKFVDEAVIR…RSLKLELLLL (159 aa)). An OBG-type G domain is found at 160-333 (ADVGLLGMPN…LALKLLDYIA (174 aa)). GTP is bound by residues 166–173 (GMPNAGKS), 191–195 (FTTLV), 213–216 (DIPG), 283–286 (NKTD), and 314–316 (SAY). 2 residues coordinate Mg(2+): serine 173 and threonine 193.

This sequence belongs to the TRAFAC class OBG-HflX-like GTPase superfamily. OBG GTPase family. In terms of assembly, monomer. Mg(2+) serves as cofactor.

The protein localises to the cytoplasm. An essential GTPase which binds GTP, GDP and possibly (p)ppGpp with moderate affinity, with high nucleotide exchange rates and a fairly low GTP hydrolysis rate. Plays a role in control of the cell cycle, stress response, ribosome biogenesis and in those bacteria that undergo differentiation, in morphogenesis control. The protein is GTPase Obg of Shewanella putrefaciens (strain CN-32 / ATCC BAA-453).